We begin with the raw amino-acid sequence, 368 residues long: MNTFGQQPTNPHAQDLLDMAMYCDHFSLYHQQQNQQLPQRPAAPPALGYGRNEYSSPTASPYPWLNGPAMNSSPYLNGGSGSPYFPAGYGGGQRQFIPPSSGFGVADFPWLSIPNQADLLKMVRPPYSYSSLIAMAIQNNPEKKLTLSQIYSYVAENFPFYKKSKAGWQNSIRHNLSLNDCFKKVARDDNDPGKGNYWTLDPNCEKMFDNGNFRRKRKRKSESVEAGFDGDASEDKKELALKSLGSDSPRGASALEQSSYGTPESKSRPAGGLAALDSSHCFTNFASNMNALMNVGAPRHFSARLGDFSNSRHYLAELASCPISSPQISEPQTGSKVPCYPSKQASSLCTSVMNSFSLNHLYSREGEV.

A disordered region spans residues 33–54; that stretch reads QNQQLPQRPAAPPALGYGRNEY. The fork-head DNA-binding region spans 124–218; that stretch reads RPPYSYSSLI…DNGNFRRKRK (95 aa). Residues 243–272 are disordered; the sequence is SLGSDSPRGASALEQSSYGTPESKSRPAGG. Positions 255–264 are enriched in polar residues; it reads LEQSSYGTPE.

The protein localises to the nucleus. Possible transcriptional activator. This is Forkhead box protein I2 from Xenopus tropicalis (Western clawed frog).